The primary structure comprises 435 residues: ATP-dependent protease ATPase subunit HslU (435 aa).

ATP-binding positions include Ile-18, 60–65 (GVGKTE), Asp-248, Glu-313, and Arg-385.

It belongs to the ClpX chaperone family. HslU subfamily. In terms of assembly, a double ring-shaped homohexamer of HslV is capped on each side by a ring-shaped HslU homohexamer. The assembly of the HslU/HslV complex is dependent on binding of ATP.

The protein localises to the cytoplasm. In terms of biological role, ATPase subunit of a proteasome-like degradation complex; this subunit has chaperone activity. The binding of ATP and its subsequent hydrolysis by HslU are essential for unfolding of protein substrates subsequently hydrolyzed by HslV. HslU recognizes the N-terminal part of its protein substrates and unfolds these before they are guided to HslV for hydrolysis. The protein is ATP-dependent protease ATPase subunit HslU of Roseobacter denitrificans (strain ATCC 33942 / OCh 114) (Erythrobacter sp. (strain OCh 114)).